We begin with the raw amino-acid sequence, 194 residues long: Peptidyl-tRNA hydrolase (194 aa).

Y17 is a tRNA binding site. H22 acts as the Proton acceptor in catalysis. The tRNA site is built by Y68, N70, and N116.

The protein belongs to the PTH family. As to quaternary structure, monomer.

The protein resides in the cytoplasm. It carries out the reaction an N-acyl-L-alpha-aminoacyl-tRNA + H2O = an N-acyl-L-amino acid + a tRNA + H(+). Functionally, hydrolyzes ribosome-free peptidyl-tRNAs (with 1 or more amino acids incorporated), which drop off the ribosome during protein synthesis, or as a result of ribosome stalling. In terms of biological role, catalyzes the release of premature peptidyl moieties from peptidyl-tRNA molecules trapped in stalled 50S ribosomal subunits, and thus maintains levels of free tRNAs and 50S ribosomes. In Pseudomonas putida (strain ATCC 700007 / DSM 6899 / JCM 31910 / BCRC 17059 / LMG 24140 / F1), this protein is Peptidyl-tRNA hydrolase.